Consider the following 231-residue polypeptide: Orotidine 5'-phosphate decarboxylase (231 aa).

Substrate is bound by residues D11, K33, 60 to 69 (DLKLHDIPNT), T117, R179, Q187, G207, and R208. Catalysis depends on K62, which acts as the Proton donor.

Belongs to the OMP decarboxylase family. Type 1 subfamily. In terms of assembly, homodimer.

The enzyme catalyses orotidine 5'-phosphate + H(+) = UMP + CO2. The protein operates within pyrimidine metabolism; UMP biosynthesis via de novo pathway; UMP from orotate: step 2/2. In terms of biological role, catalyzes the decarboxylation of orotidine 5'-monophosphate (OMP) to uridine 5'-monophosphate (UMP). This is Orotidine 5'-phosphate decarboxylase from Ehrlichia chaffeensis (strain ATCC CRL-10679 / Arkansas).